The sequence spans 352 residues: 4-hydroxy-3-methylbut-2-en-1-yl diphosphate synthase (flavodoxin) (352 aa).

Residues cysteine 265, cysteine 268, cysteine 300, and glutamate 307 each coordinate [4Fe-4S] cluster.

It belongs to the IspG family. [4Fe-4S] cluster serves as cofactor.

The enzyme catalyses (2E)-4-hydroxy-3-methylbut-2-enyl diphosphate + oxidized [flavodoxin] + H2O + 2 H(+) = 2-C-methyl-D-erythritol 2,4-cyclic diphosphate + reduced [flavodoxin]. Its pathway is isoprenoid biosynthesis; isopentenyl diphosphate biosynthesis via DXP pathway; isopentenyl diphosphate from 1-deoxy-D-xylulose 5-phosphate: step 5/6. In terms of biological role, converts 2C-methyl-D-erythritol 2,4-cyclodiphosphate (ME-2,4cPP) into 1-hydroxy-2-methyl-2-(E)-butenyl 4-diphosphate. This chain is 4-hydroxy-3-methylbut-2-en-1-yl diphosphate synthase (flavodoxin), found in Persephonella marina (strain DSM 14350 / EX-H1).